The sequence spans 599 residues: Elongation factor 4 (599 aa).

One can recognise a tr-type G domain in the interval 4–186 (DNIRNFSIIA…EIVNKIPPPR (183 aa)). GTP-binding positions include 16–21 (DHGKST) and 133–136 (NKID).

The protein belongs to the TRAFAC class translation factor GTPase superfamily. Classic translation factor GTPase family. LepA subfamily.

It is found in the cell inner membrane. The catalysed reaction is GTP + H2O = GDP + phosphate + H(+). Required for accurate and efficient protein synthesis under certain stress conditions. May act as a fidelity factor of the translation reaction, by catalyzing a one-codon backward translocation of tRNAs on improperly translocated ribosomes. Back-translocation proceeds from a post-translocation (POST) complex to a pre-translocation (PRE) complex, thus giving elongation factor G a second chance to translocate the tRNAs correctly. Binds to ribosomes in a GTP-dependent manner. In Geotalea daltonii (strain DSM 22248 / JCM 15807 / FRC-32) (Geobacter daltonii), this protein is Elongation factor 4.